Consider the following 464-residue polypeptide: NADH dehydrogenase [ubiquinone] flavoprotein 1, mitochondrial (464 aa).

Residues 1–20 (MLAARRLLGWSLPARVSVRF) constitute a mitochondrion transit peptide. Lys-81 is modified (N6-acetyllysine; alternate). Lys-81 bears the N6-succinyllysine; alternate mark. Residue 87–96 (GRGGAGFPTG) participates in NADH binding. An N6-acetyllysine modification is found at Lys-104. An FMN-binding site is contributed by 199–247 (RGAGAYICGEETALIESIEGKQGKPRLKPPFPADVGVFGCPTTVANVET). Arg-257 carries the omega-N-methylarginine modification. Lys-375 is subject to N6-acetyllysine. Residues Cys-379, Cys-382, Cys-385, and Cys-425 each coordinate [4Fe-4S] cluster.

This sequence belongs to the complex I 51 kDa subunit family. As to quaternary structure, core subunit of respiratory chain NADH dehydrogenase (Complex I) which is composed of 45 different subunits. This is a component of the flavoprotein-sulfur (FP) fragment of the enzyme. Interacts with RAB5IF. FMN is required as a cofactor. It depends on [4Fe-4S] cluster as a cofactor.

It is found in the mitochondrion inner membrane. The catalysed reaction is a ubiquinone + NADH + 5 H(+)(in) = a ubiquinol + NAD(+) + 4 H(+)(out). Functionally, core subunit of the mitochondrial membrane respiratory chain NADH dehydrogenase (Complex I) which catalyzes electron transfer from NADH through the respiratory chain, using ubiquinone as an electron acceptor. Part of the peripheral arm of the enzyme, where the electrons from NADH are accepted by flavin mononucleotide (FMN) and then passed along a chain of iron-sulfur clusters by electron tunnelling to the final acceptor ubiquinone. Contains FMN, which is the initial electron acceptor as well as one iron-sulfur cluster. The chain is NADH dehydrogenase [ubiquinone] flavoprotein 1, mitochondrial from Pongo pygmaeus (Bornean orangutan).